Reading from the N-terminus, the 201-residue chain is Small ribosomal subunit protein uS4 (201 aa).

The tract at residues K28–Y47 is disordered. Positions G92–L155 constitute an S4 RNA-binding domain.

The protein belongs to the universal ribosomal protein uS4 family. As to quaternary structure, part of the 30S ribosomal subunit. Contacts protein S5. The interaction surface between S4 and S5 is involved in control of translational fidelity.

One of the primary rRNA binding proteins, it binds directly to 16S rRNA where it nucleates assembly of the body of the 30S subunit. Functionally, with S5 and S12 plays an important role in translational accuracy. The polypeptide is Small ribosomal subunit protein uS4 (Bacteroides fragilis (strain YCH46)).